The primary structure comprises 414 residues: MKQYKILLIIADGLGDRPVSKLNGLTPLEAANKPAISDLLKNSMIGLMDPISPGVIPGSDTSHLSIFGLDPHVYYRGRGAFEALGAGATLKHGDVAFRGNFATVNNDLVVVDRRAGRKLEEGEELVKELNEKIKEINDVKIRFYKGTEHRVAVVLSGKGISDKVSDTDPHYEGLKVLESKPLEDSTEALRTAEIINILTRKVFDVLNSSEVNKRRIEQGEKPANIVLLRGAAHYIKLPSFSSYTKLKAAAVSATALIKGICRELGMNVVTPVGATGGIDTDYNAKAKAAIELLKENDFVFLHIKATDAASHDGLVEEKVKAIERIDKVIGTIVDNVGRDNLILMFTGDHATPVEVKEHSGDPVPILLYVPYPIINDNVRDFNEKEARKGSLRIRGLDVTNILLNYSNRAEKYGA.

The protein belongs to the BPG-independent phosphoglycerate mutase family. A-PGAM subfamily.

It catalyses the reaction (2R)-2-phosphoglycerate = (2R)-3-phosphoglycerate. It participates in carbohydrate degradation; glycolysis; pyruvate from D-glyceraldehyde 3-phosphate: step 3/5. Its function is as follows. Catalyzes the interconversion of 2-phosphoglycerate and 3-phosphoglycerate. In Saccharolobus islandicus (strain L.S.2.15 / Lassen #1) (Sulfolobus islandicus), this protein is 2,3-bisphosphoglycerate-independent phosphoglycerate mutase.